The following is a 231-amino-acid chain: Large ribosomal subunit protein uL1 (231 aa).

Belongs to the universal ribosomal protein uL1 family. As to quaternary structure, part of the 50S ribosomal subunit.

In terms of biological role, binds directly to 23S rRNA. The L1 stalk is quite mobile in the ribosome, and is involved in E site tRNA release. Protein L1 is also a translational repressor protein, it controls the translation of the L11 operon by binding to its mRNA. The polypeptide is Large ribosomal subunit protein uL1 (Lactobacillus delbrueckii subsp. bulgaricus (strain ATCC 11842 / DSM 20081 / BCRC 10696 / JCM 1002 / NBRC 13953 / NCIMB 11778 / NCTC 12712 / WDCM 00102 / Lb 14)).